A 221-amino-acid polypeptide reads, in one-letter code: Urease accessory protein UreF (221 aa).

The protein belongs to the UreF family. As to quaternary structure, ureD, UreF and UreG form a complex that acts as a GTP-hydrolysis-dependent molecular chaperone, activating the urease apoprotein by helping to assemble the nickel containing metallocenter of UreC. The UreE protein probably delivers the nickel.

Its subcellular location is the cytoplasm. Functionally, required for maturation of urease via the functional incorporation of the urease nickel metallocenter. In Vibrio parahaemolyticus, this protein is Urease accessory protein UreF.